Here is a 285-residue protein sequence, read N- to C-terminus: Pseudouridine-5'-phosphate glycosidase (285 aa).

Catalysis depends on glutamate 17, which acts as the Proton donor. Lysine 77 and valine 97 together coordinate substrate. Mn(2+) is bound at residue aspartate 126. 128-130 (SQD) lines the substrate pocket. The active-site Nucleophile is lysine 147.

Belongs to the pseudouridine-5'-phosphate glycosidase family. As to quaternary structure, homotrimer. Mn(2+) serves as cofactor.

It carries out the reaction D-ribose 5-phosphate + uracil = psi-UMP + H2O. Functionally, catalyzes the reversible cleavage of pseudouridine 5'-phosphate (PsiMP) to ribose 5-phosphate and uracil. Functions biologically in the cleavage direction, as part of a pseudouridine degradation pathway. The sequence is that of Pseudouridine-5'-phosphate glycosidase from Thermotoga maritima (strain ATCC 43589 / DSM 3109 / JCM 10099 / NBRC 100826 / MSB8).